The sequence spans 482 residues: Cytochrome P450 monooxygenase pynD (482 aa).

A signal peptide spans 1–22 (MWRIPVIVALVAGLLYWVRKQG). Asn-401 carries an N-linked (GlcNAc...) asparagine glycan. Cys-417 lines the heme pocket.

The protein belongs to the cytochrome P450 family. Requires heme as cofactor.

It participates in secondary metabolite biosynthesis. Cytochrome P450 monooxygenase; part of the gene cluster that mediates the biosynthesis of pyranonigrins, a family of antioxidative compounds. The first step of pyranonigrins biosynthesis is performed by the hybrid PKS-NRPS synthetase that condenses 6 malonyl-CoA units to an acetyl starter unit, to form a 1,3,5-trioxotetradecane-6,8-dienyl-ACP. The enoyl reductase (ER) domain of pynA is likely to be functional during the first two rounds of polyketide chain extension, to generate the saturated C-C bonds of the alkyl side chain. PynA subsequently forms the amide bond between the acyl chain and L-serine. Although pynA has a terminal reductase domain, it appears to require the thioesterase pynI for the release of the straight-chain intermediate from pynA via the formation of a tetramic acid pyranonigrin J. The methyltransferase pynC then coverts pyranonigrin J to pyranonigrin I via N-methylation. The FAD-dependent monooxygenase pynG catalyzes an epoxidation-mediated cyclization to form the dihydro-gamma-pyrone moiety, followed by pynD-catalyzed oxidation of the alcohol to the ketone and enolization to yield the characteristic tetramic acid-fused gamma-pyrone core of pyranonigrin H. Pyranonigrin H is substrate of pynH for dehydration-mediated exo-methylene formation from the serine side chain to produce pyranonigrin E, before the oxidase pynE reduces the exo-methylene of pyranonigrin E into a pendant methyl to form pyranonigrin G. The FAD-linked oxidoreductase pynB performs the reverse reaction and converts pyranonigrin G back to pyranonigrin E. The chain is Cytochrome P450 monooxygenase pynD from Aspergillus niger (strain ATCC MYA-4892 / CBS 513.88 / FGSC A1513).